The chain runs to 84 residues: Large ribosomal subunit protein bL27 (84 aa).

Residues 1-22 (MAHKKAGGSTRNGRDSESKRLG) are disordered.

It belongs to the bacterial ribosomal protein bL27 family.

The polypeptide is Large ribosomal subunit protein bL27 (Shewanella woodyi (strain ATCC 51908 / MS32)).